Consider the following 652-residue polypeptide: Interferon-induced GTP-binding protein Mx1 (652 aa).

The disordered stretch occupies residues 1-27; that stretch reads MKERTSACRHGTPQKHPDTSEESQAME. A Dynamin-type G domain is found at 58–331; sequence DLALPAIAVI…LTSHICKSLP (274 aa). Residues 68-75 form a G1 motif region; that stretch reads GDQSSGKS. 68–75 lines the GTP pocket; the sequence is GDQSSGKS. The G2 motif stretch occupies residues 93–95; the sequence is VTR. The segment at 169–172 is G3 motif; sequence DLPG. Residues 169-173 and 238-241 contribute to the GTP site; these read DLPGI and TKPD. Residues 238-241 form a G4 motif region; it reads TKPD. Residues 270 to 273 form a G5 motif region; the sequence is KCRG. The bundle signaling element (BSE) stretch occupies residues 332-357; that stretch reads ILENQINVNHQIASEELQKYGADIPE. Residues 357 to 526 are middle domain; sequence EDDSKRLSFL…HFQMEHIVYC (170 aa). Residues 358-622 form a stalk region; that stretch reads DDSKRLSFLM…TSKCNWFLTE (265 aa). Residues 564–652 form the GED domain; sequence TTEMTQHLNA…AQRKLAKFSN (89 aa).

It belongs to the TRAFAC class dynamin-like GTPase superfamily. Dynamin/Fzo/YdjA family. As to quaternary structure, homooligomer. Oligomerizes into multimeric filamentous or ring-like structures by virtue of its stalk domain. Oligomerization is critical for GTPase activity, protein stability, and recognition of viral target structures. Interacts with TRPC1, TRPC3, TRPC4, TRPC5, TRPC6 and TRPC7. Interacts with HSPA5. Interacts with TUBB/TUBB5. Interacts with DDX39A and DDX39B. ISGylated.

Its subcellular location is the nucleus. It localises to the cytoplasm. It is found in the endoplasmic reticulum membrane. The protein localises to the perinuclear region. Functionally, interferon-induced dynamin-like GTPase which has antiviral activity against influenza A virus, (IAV) and Thogoto virus (THOV). Inhibits IAV by interfering with the process of primary transcription, probably by affecting the viral polymerase function. This Rattus norvegicus (Rat) protein is Interferon-induced GTP-binding protein Mx1 (Mx1).